The primary structure comprises 263 residues: H-2 class II histocompatibility antigen, A-S beta chain (263 aa).

Residues 1-27 (MALQIPSLLLSAAVVVLMVLSSPGTEG) form the signal peptide. The interval 28 to 120 (GDSERHFVFQ…VETHTSLRRL (93 aa)) is beta-1. At 28–224 (GDSERHFVFQ…RAQSESARSK (197 aa)) the chain is on the extracellular side. 2 disulfides stabilise this stretch: Cys42–Cys104 and Cys143–Cys199. The N-linked (GlcNAc...) asparagine glycan is linked to Asn46. A beta-2 region spans residues 121 to 214 (EQPNVVISLS…SLKSPITVEW (94 aa)). Positions 123–211 (PNVVISLSRT…EHPSLKSPIT (89 aa)) constitute an Ig-like C1-type domain. The tract at residues 215–224 (RAQSESARSK) is connecting peptide. Residues 225-245 (MLSGIGGCVLGVIFLGLGLFI) traverse the membrane as a helical segment. The Cytoplasmic portion of the chain corresponds to 246 to 263 (RHRSQKGPRGPPPAGLLQ).

Belongs to the MHC class II family. Post-translationally, ubiquitinated in immature dendritic cells leading to down-regulation of MHC class II.

It is found in the membrane. This chain is H-2 class II histocompatibility antigen, A-S beta chain (H2-Ab1), found in Mus musculus (Mouse).